Consider the following 296-residue polypeptide: Trimeric intracellular cation channel type A (296 aa).

At methionine 1–valine 19 the chain is on the lumenal side. A helical transmembrane segment spans residues proline 20–leucine 37. At lysine 38–proline 51 the chain is on the cytoplasmic side. A helical transmembrane segment spans residues phenylalanine 52 to leucine 73. Residue glycine 74 coordinates Ca(2+). Residues glycine 74–serine 85 are Lumenal-facing. A helical membrane pass occupies residues serine 86–asparagine 103. Residues leucine 104–lysine 107 lie on the Cytoplasmic side of the membrane. The chain crosses the membrane as a helical span at residues cysteine 108–arginine 126. Positions 122 and 126 each coordinate a 1,2-diacyl-sn-glycero-3-phospho-(1D-myo-inositol-4,5-bisphosphate). Residues valine 127–glycine 144 are Lumenal-facing. A helical transmembrane segment spans residues tryptophan 145–methionine 162. The Cytoplasmic segment spans residues serine 163–methionine 183. Residues serine 184–glutamine 201 form a helical membrane-spanning segment. The Lumenal portion of the chain corresponds to threonine 202–glutamate 209. A helical membrane pass occupies residues alanine 210–threonine 230. Topologically, residues histidine 231–proline 273 are cytoplasmic. The disordered stretch occupies residues histidine 256–glutamate 296. A compositionally biased stretch (basic and acidic residues) spans lysine 278–threonine 287.

It belongs to the TMEM38 family. Homotrimer; conformation seems to be controled by binding to diacylglycerol (DAG).

Its subcellular location is the sarcoplasmic reticulum membrane. It is found in the nucleus membrane. The catalysed reaction is K(+)(in) = K(+)(out). With respect to regulation, channel activity is activated by a change of voltage within the sarcoplasmic reticulum lumen and blocked by luminal high Ca(2+) levels. Functionally, intracellular monovalent cation channel required for maintenance of rapid intracellular calcium release. Acts as a potassium counter-ion channel that functions in synchronization with calcium release from intracellular stores. Opened by a change of voltage within the sarcoplasmic reticulum lumen. This Gallus gallus (Chicken) protein is Trimeric intracellular cation channel type A (TMEM38A).